Here is a 314-residue protein sequence, read N- to C-terminus: Dihydroorotate dehydrogenase (fumarate) (314 aa).

Substrate-binding positions include lysine 46, 70–74 (NSMGL), and asparagine 130. A Glycyl lysine isopeptide (Lys-Gly) (interchain with G-Cter in ubiquitin) cross-link involves residue lysine 46. An FMN-binding site is contributed by 46–47 (KS). Asparagine 130 is an FMN binding site. The active-site Nucleophile is cysteine 133. Lysine 167 and isoleucine 195 together coordinate FMN. 196-197 (NS) is a binding site for substrate. FMN contacts are provided by residues glycine 224, 252–253 (GG), and 274–275 (GT).

It belongs to the dihydroorotate dehydrogenase family. Type 1 subfamily. As to quaternary structure, homodimer. FMN is required as a cofactor.

The protein resides in the cytoplasm. The enzyme catalyses (S)-dihydroorotate + fumarate = orotate + succinate. Its pathway is pyrimidine metabolism; UMP biosynthesis via de novo pathway. Its activity is regulated as follows. The activity is independent of the presence of oxygen. Its function is as follows. Catalyzes the conversion of dihydroorotate to orotate with fumarate as the electron acceptor. Molecular oxygen can replace fumarate in vitro. Does not use oxaloacetate or NAD or NADP as electron acceptors. The chain is Dihydroorotate dehydrogenase (fumarate) (URA1) from Saccharomyces cerevisiae (strain ATCC 204508 / S288c) (Baker's yeast).